The sequence spans 160 residues: Cytochrome b6-f complex subunit 4 (160 aa).

3 helical membrane passes run 36–56 (LLYIFPVVILGTFACLVGLAV), 95–115 (LLGIALQTLVPLGLMLIPFIE), and 128–148 (IAMAFFLFGTVITIYLGIGAC).

Belongs to the cytochrome b family. PetD subfamily. In terms of assembly, the 4 large subunits of the cytochrome b6-f complex are cytochrome b6, subunit IV (17 kDa polypeptide, PetD), cytochrome f and the Rieske protein, while the 4 small subunits are PetG, PetL, PetM and PetN. The complex functions as a dimer.

It localises to the cellular thylakoid membrane. Functionally, component of the cytochrome b6-f complex, which mediates electron transfer between photosystem II (PSII) and photosystem I (PSI), cyclic electron flow around PSI, and state transitions. The sequence is that of Cytochrome b6-f complex subunit 4 from Prochlorococcus marinus (strain MIT 9313).